A 529-amino-acid chain; its full sequence is Cytokinin dehydrogenase 4 (529 aa).

Residues Met-1–His-27 form the signal peptide. One can recognise an FAD-binding PCMH-type domain in the interval Cys-63–Ala-244. Ala-99, Gly-101, and Gly-103 together coordinate FAD. His-104 is modified (pros-8alpha-FAD histidine). FAD-binding residues include Ser-105, Gln-109, Asp-168, Thr-173, Ser-179, Val-183, and Ile-234. Residues Asn-285, Asn-419, and Asn-425 are each glycosylated (N-linked (GlcNAc...) asparagine). Residues Tyr-479 and Gln-517 each coordinate FAD.

This sequence belongs to the oxygen-dependent FAD-linked oxidoreductase family. In terms of assembly, monomer. Requires FAD as cofactor. Expressed in inflorescence meristems.

It localises to the secreted. It is found in the extracellular space. It catalyses the reaction N(6)-dimethylallyladenine + A + H2O = 3-methyl-2-butenal + adenine + AH2. In terms of biological role, catalyzes the oxidation of cytokinins, a family of N(6)-substituted adenine derivatives that are plant hormones, where the substituent is an isopentenyl group. The protein is Cytokinin dehydrogenase 4 (CKX4) of Oryza sativa subsp. japonica (Rice).